The following is an 887-amino-acid chain: Phosphatidylinositol 3-kinase catalytic subunit type 3 (887 aa).

One can recognise a C2 PI3K-type domain in the interval 35-184 (YKAVLEDPML…LAKLTKAHRQ (150 aa)). The interval 149-170 (VEADGSEPTRTPGRTSSTLSED) is disordered. Polar residues predominate over residues 156–170 (PTRTPGRTSSTLSED). Residue Thr163 is modified to Phosphothreonine; by AMPK. Ser165 is subject to Phosphoserine; by AMPK. A phosphoserine mark is found at Ser244, Ser261, and Ser282. The region spanning 283–520 (DHDLKPNATT…PKTHEMYLNV (238 aa)) is the PIK helical domain. The interval 415 to 466 (LEPTKKDSQTSASESLSNSGVSSGDIDSSQIITNPLPPVASPPPASKAKEVS) is disordered. The segment covering 425-437 (SASESLSNSGVSS) has biased composition (low complexity). The segment covering 449-459 (PLPPVASPPPA) has biased composition (pro residues). One can recognise a PI3K/PI4K catalytic domain in the interval 605-871 (IPETATLFKS…LIDESVHALF (267 aa)). Positions 611 to 617 (LFKSALM) are G-loop. Residues 740 to 748 (GVGDRHLDN) are catalytic loop. An activation loop region spans residues 759–780 (HIDFGYILGRDPKPLPPPMKLN).

Belongs to the PI3/PI4-kinase family. Component of the PI3K (PI3KC3/PI3K-III/class III phosphatidylinositol 3-kinase) complex the core of which is composed of the catalytic subunit PIK3C3, the regulatory subunit PIK3R4 and BECN1 associating with additional regulatory/auxiliary subunits to form alternative complex forms. Alternative complex forms containing a fourth regulatory subunit in a mutually exclusive manner are: the PI3K complex I (PI3KC3-C1) containing ATG14, and the PI3K complex II (PI3KC3-C2) containing UVRAG. PI3KC3-C1 displays a V-shaped architecture with PIK3R4 serving as a bridge between PIK3C3 and the ATG14:BECN1 subcomplex. Both, PI3KC3-C1 and PI3KC3-C2, can associate with further regulatory subunits such as RUBCN, SH3GLB1/Bif-1 and AMBRA1. PI3KC3-C1 probably associates with PIK3CB. Interacts with RAB7A in the presence of PIK3R4. Interacts with AMBRA1. Interacts with BECN1P1/BECN2. Interacts with SLAMF1. May be a component of a complex composed of RAB5A (in GDP-bound form), DYN2 and PIK3C3. Interacts with NCKAP1L. Interacts with ATG14; this interaction is increased in the absence of TMEM39A. Interacts with STEEP1; the interaction is STING1-dependent and required for trafficking of STING1 from the endoplasmic reticulum. Interacts with YWHAG. Interacts with ARMC3. It depends on Mn(2+) as a cofactor. In terms of processing, ubiquitinated via 'Lys-29'- and 'Lys-48'-linked ubiquitination by UBE3C, promoting its degradation. Deubiquitination by ZRANB1/TRABID promotes its stabilization, leading to autophagosome maturation.

Its subcellular location is the midbody. The protein localises to the late endosome. It is found in the cytoplasmic vesicle. The protein resides in the autophagosome. The catalysed reaction is a 1,2-diacyl-sn-glycero-3-phospho-(1D-myo-inositol) + ATP = a 1,2-diacyl-sn-glycero-3-phospho-(1D-myo-inositol-3-phosphate) + ADP + H(+). Catalytic subunit of the PI3K complex that mediates formation of phosphatidylinositol 3-phosphate; different complex forms are believed to play a role in multiple membrane trafficking pathways: PI3KC3-C1 is involved in initiation of autophagosomes and PI3KC3-C2 in maturation of autophagosomes and endocytosis. As part of PI3KC3-C1, promotes endoplasmic reticulum membrane curvature formation prior to vesicle budding. Involved in regulation of degradative endocytic trafficking and required for the abscission step in cytokinesis, probably in the context of PI3KC3-C2. Involved in the transport of lysosomal enzyme precursors to lysosomes. Required for transport from early to late endosomes. The chain is Phosphatidylinositol 3-kinase catalytic subunit type 3 from Mus musculus (Mouse).